Reading from the N-terminus, the 326-residue chain is Target of rapamycin complex subunit LST8 (326 aa).

Methionine 1 is subject to N-acetylmethionine. WD repeat units lie at residues 1–37 (MNTS…CTRT), 40–80 (HQDS…PIIS), 83–122 (GVNK…LQCQ), 126–165 (QVNA…NEQL), and 168–207 (EPEV…GDEV). Threonine 51 is subject to Phosphothreonine. Lysine 86 is covalently cross-linked (Glycyl lysine isopeptide (Lys-Gly) (interchain with G-Cter in SUMO3)). Glycyl lysine isopeptide (Lys-Gly) (interchain with G-Cter in SUMO3) cross-links involve residues lysine 215, lysine 245, and lysine 261. The stretch at 218–257 (AHTRYALQCRFSPDSTLLATCSADQTCKIWRTSNFSLMTE) is one WD 6 repeat. A WD 7 repeat occupies 268–309 (SSRGWMWGCAFSGDSQYIVTASSDNLARLWCVETGEIKREYG). Lysine 305 is covalently cross-linked (Glycyl lysine isopeptide (Lys-Gly) (interchain with G-Cter in SUMO3); alternate). Residues lysine 305 and lysine 313 each participate in a glycyl lysine isopeptide (Lys-Gly) (interchain with G-Cter in ubiquitin); alternate cross-link. Residue lysine 313 forms a Glycyl lysine isopeptide (Lys-Gly) (interchain with G-Cter in SUMO1); alternate linkage.

It belongs to the WD repeat LST8 family. In terms of assembly, part of the mechanistic target of rapamycin complex 1 (mTORC1) which contains MTOR, MLST8 and RPTOR. mTORC1 associates with AKT1S1/PRAS40, which inhibits its activity. mTORC1 binds to and is inhibited by FKBP12-rapamycin. Within mTORC1, interacts directly with MTOR and RPTOR. Component of the mechanistic target of rapamycin complex 2 (mTORC2), consisting in two heterotretramers composed of MTOR, MLST8, RICTOR and MAPKAP1/SIN1. Contrary to mTORC1, mTORC2 does not bind to and is not sensitive to FKBP12-rapamycin. mTORC1 and mTORC2 associate with DEPTOR, which regulates their activity. Interacts with RHEB. Interacts with MEAK7. Interacts with SIK3. Interacts with SLC38A7; this interaction promotes the recruitment of mTORC1 to the lysosome and its subsequent activation. Phosphorylation at Thr-51 by CDK1 promotes ubiquitination by the SCF(FBXW7) complex, followed by degradation. In terms of processing, ubiquitination by the SCF(FBXW7) and SCF(FBXW11) complexes following phosphorylation at Thr-51 by CDK1, leads to its degradation by the proteasome. Ubiquitination at Lys-305 and Lys-313 by TRAF2 via 'Lys-63'-linked polyubiquitin chains inhibits formation of the mTORC2 complex, while promoting formation of the mTORC1 complex: ubiquitination disrupts the interaction between MLST8 and MAPKAP1/SIN1 to favor mTORC1 assembly. Deubiquitination at Lys-305 and Lys-313 by OTUD7B promotes MLST8 interaction with MAPKAP1/SIN1, facilitating mTORC2 assembly. Post-translationally, sumoylation with SUMO1, SUMO2 and SUMO3 promotes assembly of both mTORC1 and mTORC2 complexes.

Its subcellular location is the lysosome membrane. It is found in the cytoplasm. Its function is as follows. Subunit of both mTORC1 and mTORC2, which regulates cell growth and survival in response to nutrient and hormonal signals. mTORC1 is activated in response to growth factors or amino acids. In response to nutrients, mTORC1 is recruited to the lysosome membrane and promotes protein, lipid and nucleotide synthesis by phosphorylating several substrates, such as ribosomal protein S6 kinase (RPS6KB1 and RPS6KB2) and EIF4EBP1 (4E-BP1). In the same time, it inhibits catabolic pathways by phosphorylating the autophagy initiation components ULK1 and ATG13, as well as transcription factor TFEB, a master regulators of lysosomal biogenesis and autophagy. The mTORC1 complex is inhibited in response to starvation and amino acid depletion. Within mTORC1, MLST8 interacts directly with MTOR and enhances its kinase activity. In nutrient-poor conditions, stabilizes the MTOR-RPTOR interaction and favors RPTOR-mediated inhibition of MTOR activity. As part of the mTORC2 complex, transduces signals from growth factors to pathways involved in proliferation, cytoskeletal organization, lipogenesis and anabolic output. mTORC2 is also activated by growth factors, but seems to be nutrient-insensitive. In response to growth factors, mTORC2 phosphorylates and activates AGC protein kinase family members, including AKT (AKT1, AKT2 and AKT3), PKC (PRKCA, PRKCB and PRKCE) and SGK1. mTORC2 functions upstream of Rho GTPases to regulate the actin cytoskeleton, probably by activating one or more Rho-type guanine nucleotide exchange factors. mTORC2 promotes the serum-induced formation of stress-fibers or F-actin. mTORC2 plays a critical role in AKT1 activation by mediating phosphorylation of different sites depending on the context, such as 'Thr-450', 'Ser-473', 'Ser-477' or 'Thr-479', facilitating the phosphorylation of the activation loop of AKT1 on 'Thr-308' by PDPK1/PDK1 which is a prerequisite for full activation. mTORC2 regulates the phosphorylation of SGK1 at 'Ser-422'. mTORC2 also modulates the phosphorylation of PRKCA on 'Ser-657'. Within mTORC2, MLST8 acts as a bridge between MAPKAP1/SIN1 and MTOR. The sequence is that of Target of rapamycin complex subunit LST8 from Bos taurus (Bovine).